The primary structure comprises 96 residues: Small ribosomal subunit protein bS6 (96 aa).

Belongs to the bacterial ribosomal protein bS6 family.

In terms of biological role, binds together with bS18 to 16S ribosomal RNA. The sequence is that of Small ribosomal subunit protein bS6 from Streptococcus thermophilus (strain ATCC BAA-491 / LMD-9).